The following is a 326-amino-acid chain: Beta-ketoacyl-[acyl-carrier-protein] synthase III (326 aa).

Catalysis depends on residues C120 and H253. The interval 254–258 is ACP-binding; sequence QANIR. N283 is a catalytic residue.

Belongs to the thiolase-like superfamily. FabH family. In terms of assembly, homodimer.

It is found in the cytoplasm. It catalyses the reaction malonyl-[ACP] + acetyl-CoA + H(+) = 3-oxobutanoyl-[ACP] + CO2 + CoA. The protein operates within lipid metabolism; fatty acid biosynthesis. In terms of biological role, catalyzes the condensation reaction of fatty acid synthesis by the addition to an acyl acceptor of two carbons from malonyl-ACP. Catalyzes the first condensation reaction which initiates fatty acid synthesis and may therefore play a role in governing the total rate of fatty acid production. Possesses both acetoacetyl-ACP synthase and acetyl transacylase activities. Its substrate specificity determines the biosynthesis of branched-chain and/or straight-chain of fatty acids. This chain is Beta-ketoacyl-[acyl-carrier-protein] synthase III, found in Cupriavidus pinatubonensis (strain JMP 134 / LMG 1197) (Cupriavidus necator (strain JMP 134)).